A 242-amino-acid chain; its full sequence is uncharacterized protein (242 aa).

The N-terminal stretch at 1 to 17 is a signal peptide; the sequence is MKFSPAYLLAFAPIVAA. Asn47, Asn86, Asn122, Asn159, and Asn178 each carry an N-linked (GlcNAc...) asparagine glycan. Positions 176-214 are disordered; the sequence is NANESTADGQAQSGSSGSSSDSGSHSGHSSATQTSSTTA. A compositionally biased stretch (low complexity) spans 180–214; the sequence is STADGQAQSGSSGSSSDSGSHSGHSSATQTSSTTA. Residue Ala218 is the site of GPI-like-anchor amidated alanine attachment. A propeptide spans 219–242 (removed in mature form); the sequence is GAVALETAAWGILGAAVVGGLAVL.

In terms of processing, the GPI-like anchor contains a phosphoceramide lipid group. The anchor position has not been determined.

It localises to the cell membrane. This is an uncharacterized protein from Aspergillus fumigatus (strain ATCC MYA-4609 / CBS 101355 / FGSC A1100 / Af293) (Neosartorya fumigata).